A 209-amino-acid polypeptide reads, in one-letter code: dTTP/UTP pyrophosphatase (209 aa).

Asp-88 (proton acceptor) is an active-site residue.

It belongs to the Maf family. YhdE subfamily. A divalent metal cation is required as a cofactor.

The protein resides in the cytoplasm. It catalyses the reaction dTTP + H2O = dTMP + diphosphate + H(+). The catalysed reaction is UTP + H2O = UMP + diphosphate + H(+). Its function is as follows. Nucleoside triphosphate pyrophosphatase that hydrolyzes dTTP and UTP. May have a dual role in cell division arrest and in preventing the incorporation of modified nucleotides into cellular nucleic acids. This is dTTP/UTP pyrophosphatase from Burkholderia mallei (strain ATCC 23344).